The chain runs to 186 residues: MDLSSLRPAKGAVKARKRVGRGPGSGNGTTAGKGNKGQQSRSGYQRPVIEGGQMPIYRRLPKFGFTPPNQKAVACVNVAQIQMWIEKGLVGEEISVLDLKHLCNASNQEYFKVLGNGELTSTVTITAHFFSKSAEEKIAKAGGKIVKAYRTLEEAAKVNGLPFEEALLTPKAKVVKVKKEKKSVKS.

The segment at 1–48 is disordered; that stretch reads MDLSSLRPAKGAVKARKRVGRGPGSGNGTTAGKGNKGQQSRSGYQRPV. Positions 21–35 are enriched in gly residues; it reads RGPGSGNGTTAGKGN.

It belongs to the universal ribosomal protein uL15 family. Part of the 50S ribosomal subunit.

Functionally, binds to the 23S rRNA. This is Large ribosomal subunit protein uL15 from Chlorobaculum tepidum (strain ATCC 49652 / DSM 12025 / NBRC 103806 / TLS) (Chlorobium tepidum).